The sequence spans 778 residues: uncharacterized protein (778 aa).

Residues 1–92 form the PE domain; the sequence is MSFVIAVPEA…GARSYVVAEA (92 aa). Disordered regions lie at residues 125-163, 372-510, and 718-778; these read ADGT…AGLI, TGLA…GDAF, and QGGL…GADG. Composition is skewed to gly residues over residues 402–429, 436–510, and 718–763; these read NQTG…GGLG, DGTG…GDAF, and QGGL…GSSG.

It belongs to the mycobacterial PE family. PGRS subfamily.

This is an uncharacterized protein from Mycobacterium bovis (strain ATCC BAA-935 / AF2122/97).